The sequence spans 815 residues: Calpain-3 (815 aa).

Residues 7–36 (ASVAPRTAAEPRSPGPVPHPAQSKATEAGG) are disordered. The region spanning 74-417 (LYVDPEFPPD…FTKLEICNLT (344 aa)) is the Calpain catalytic domain. Residues Cys-129, His-334, and Asn-358 contribute to the active site. The tract at residues 418–586 (ADALQSDKLQ…KRNLSEEVEN (169 aa)) is domain III. Positions 587-649 (TISVDRPVPI…QESEEQQQFR (63 aa)) are linker. The interval 605-646 (SNKELGVDQESEEGKGKTSPDKQEQSPQPQPGSSDQESEEQQ) is disordered. The span at 616-628 (EEGKGKTSPDKQE) shows a compositional bias: basic and acidic residues. Residues 629 to 639 (QSPQPQPGSSD) show a composition bias toward low complexity. EF-hand domains are found at residues 643–677 (EEQQ…VVNK), 686–719 (FTLE…NKIK), 716–751 (NKIK…AGFH), and 781–815 (VRLE…TMYA). The tract at residues 650–815 (NIFKQIAGDD…LEWLQLTMYA (166 aa)) is domain IV. Positions 656, 659, 661, 666, 699, 701, 703, 705, 710, 729, 731, 733, 735, 740, 794, 796, 798, and 800 each coordinate Ca(2+).

It belongs to the peptidase C2 family. In terms of assembly, homodimer; via EF-hand domain 4. Interacts with TTN/titin. Interacts with CMYA5; this interaction, which results in CMYA5 proteolysis, may protect CAPN3 from autolysis. Interacts with SIMC1. Interacts with UTP25; the interaction is required for CAPN3 translocation to the nucleolus.

The protein resides in the cytoplasm. The protein localises to the nucleus. It is found in the nucleolus. It catalyses the reaction Broad endopeptidase activity.. With respect to regulation, activated by micromolar concentrations of calcium and inhibited by calpastatin. Its function is as follows. Calcium-regulated non-lysosomal thiol-protease. Proteolytically cleaves CTBP1. Mediates, with UTP25, the proteasome-independent degradation of p53/TP53. The sequence is that of Calpain-3 (CAPN3) from Macaca fascicularis (Crab-eating macaque).